A 624-amino-acid chain; its full sequence is Phosphomethylpyrimidine synthase (624 aa).

Residues 40-61 (VPMRKISQSDTPTNTGREKNPP) form a disordered region. The segment covering 45 to 54 (ISQSDTPTNT) has biased composition (polar residues). Residues Asn-229, Met-258, Tyr-287, His-323, 343 to 345 (SRG), 384 to 387 (DGLR), and Glu-423 contribute to the substrate site. His-427 is a Zn(2+) binding site. Tyr-450 lines the substrate pocket. Residue His-491 participates in Zn(2+) binding. [4Fe-4S] cluster is bound by residues Cys-571, Cys-574, and Cys-579.

It belongs to the ThiC family. In terms of assembly, homodimer. [4Fe-4S] cluster is required as a cofactor.

The catalysed reaction is 5-amino-1-(5-phospho-beta-D-ribosyl)imidazole + S-adenosyl-L-methionine = 4-amino-2-methyl-5-(phosphooxymethyl)pyrimidine + CO + 5'-deoxyadenosine + formate + L-methionine + 3 H(+). The protein operates within cofactor biosynthesis; thiamine diphosphate biosynthesis. Its function is as follows. Catalyzes the synthesis of the hydroxymethylpyrimidine phosphate (HMP-P) moiety of thiamine from aminoimidazole ribotide (AIR) in a radical S-adenosyl-L-methionine (SAM)-dependent reaction. This is Phosphomethylpyrimidine synthase from Methylococcus capsulatus (strain ATCC 33009 / NCIMB 11132 / Bath).